The following is a 194-amino-acid chain: ATP-dependent Clp protease proteolytic subunit (194 aa).

Ser-98 (nucleophile) is an active-site residue. The active site involves His-123.

It belongs to the peptidase S14 family. Fourteen ClpP subunits assemble into 2 heptameric rings which stack back to back to give a disk-like structure with a central cavity, resembling the structure of eukaryotic proteasomes.

The protein resides in the cytoplasm. The enzyme catalyses Hydrolysis of proteins to small peptides in the presence of ATP and magnesium. alpha-casein is the usual test substrate. In the absence of ATP, only oligopeptides shorter than five residues are hydrolyzed (such as succinyl-Leu-Tyr-|-NHMec, and Leu-Tyr-Leu-|-Tyr-Trp, in which cleavage of the -Tyr-|-Leu- and -Tyr-|-Trp bonds also occurs).. Its function is as follows. Cleaves peptides in various proteins in a process that requires ATP hydrolysis. Has a chymotrypsin-like activity. Plays a major role in the degradation of misfolded proteins. The sequence is that of ATP-dependent Clp protease proteolytic subunit from Clostridium tetani (strain Massachusetts / E88).